The primary structure comprises 468 residues: Glutamate--tRNA ligase 2 (468 aa).

Residues Pro9–Gly19 carry the 'HIGH' region motif. Residues Cys98, Cys100, Cys125, and His127 each contribute to the Zn(2+) site. Positions Arg236–Arg240 match the 'KMSKS' region motif. Position 239 (Lys239) interacts with ATP.

Belongs to the class-I aminoacyl-tRNA synthetase family. Glutamate--tRNA ligase type 1 subfamily. Monomer. The cofactor is Zn(2+).

It localises to the cytoplasm. It catalyses the reaction tRNA(Glu) + L-glutamate + ATP = L-glutamyl-tRNA(Glu) + AMP + diphosphate. In terms of biological role, catalyzes the attachment of glutamate to tRNA(Glu) in a two-step reaction: glutamate is first activated by ATP to form Glu-AMP and then transferred to the acceptor end of tRNA(Glu). The chain is Glutamate--tRNA ligase 2 from Methylococcus capsulatus (strain ATCC 33009 / NCIMB 11132 / Bath).